Here is a 233-residue protein sequence, read N- to C-terminus: DnaA regulatory inactivator Hda (233 aa).

Belongs to the DnaA family. HdA subfamily. As to quaternary structure, the active form seems to be an ADP-bound monomer. Forms the RIDA complex (regulatory inactivation of DnaA) of ATP-DnaA, ADP-Hda and the DNA-loaded beta sliding clamp (dnaN).

In terms of biological role, mediates the interaction of DNA replication initiator protein DnaA with DNA polymerase subunit beta sliding clamp (dnaN). Stimulates hydrolysis of ATP-DnaA to ADP-DnaA, rendering DnaA inactive for reinitiation, a process called regulatory inhibition of DnaA or RIDA. This Shigella boydii serotype 4 (strain Sb227) protein is DnaA regulatory inactivator Hda.